The chain runs to 382 residues: Methylthioribose-1-phosphate isomerase (382 aa).

Residue D261 is the Proton donor of the active site.

Belongs to the eIF-2B alpha/beta/delta subunits family. MtnA subfamily.

It is found in the cytoplasm. It localises to the nucleus. The enzyme catalyses 5-(methylsulfanyl)-alpha-D-ribose 1-phosphate = 5-(methylsulfanyl)-D-ribulose 1-phosphate. The protein operates within amino-acid biosynthesis; L-methionine biosynthesis via salvage pathway; L-methionine from S-methyl-5-thio-alpha-D-ribose 1-phosphate: step 1/6. Catalyzes the interconversion of methylthioribose-1-phosphate (MTR-1-P) into methylthioribulose-1-phosphate (MTRu-1-P). This is Methylthioribose-1-phosphate isomerase from Ricinus communis (Castor bean).